A 231-amino-acid polypeptide reads, in one-letter code: Thrombin-like enzyme leucurobin (231 aa).

The Peptidase S1 domain occupies 1–223 (VIGGDECDIN…YLPWIQSIIA (223 aa)). Cystine bridges form between C7/C139, C26/C42, C74/C230, C118/C184, C150/C163, and C174/C199. Residues H41 and D86 each act as charge relay system in the active site. N146 carries an N-linked (GlcNAc...) asparagine glycan. The active-site Charge relay system is S178. N225 carries an N-linked (GlcNAc...) asparagine glycan.

The protein belongs to the peptidase S1 family. Snake venom subfamily. As to quaternary structure, monomer. In terms of processing, glycosylated. As to expression, expressed by the venom gland.

It is found in the secreted. The enzyme catalyses Selective cleavage of Arg-|-Xaa bond in fibrinogen, to form fibrin, and release fibrinopeptide A. The specificity of further degradation of fibrinogen varies with species origin of the enzyme.. Inhibited by PMSF and benzamidine. Its clotting effect is strongly inhibited by antibothropic serum. Is not inhibited by heparin. Its function is as follows. Thrombin-like snake venom serine protease that cleaves Arg-Gly bonds in alpha-chain of fibrinogen (FGA). Induces temporary episodes of opisthotonos and rapid rolling around the long axis of the animal (gyroxin-like effect), when injected into the tail veins of mice (0.143 ug/g mouse). The polypeptide is Thrombin-like enzyme leucurobin (Bothrops leucurus (Whitetail lancehead)).